The primary structure comprises 579 residues: MFS-type transporter ppz2 (579 aa).

The segment at 1–23 is disordered; it reads MQTATALEDSANAPSPAASSQGQ. Positions 10 to 20 are enriched in low complexity; that stretch reads SANAPSPAASS. Residue Asn38 is glycosylated (N-linked (GlcNAc...) asparagine). The next 14 membrane-spanning stretches (helical) occupy residues 48–68, 83–103, 121–141, 145–165, 171–191, 203–223, 236–256, 269–289, 298–318, 336–356, 374–394, 403–423, 438–460, and 516–536; these read ALIMVALCCAVFLHALDNTII, AAYTWIGSTYLLAVAASTMVW, LCFFTGSLIAALSANFAMLIA, IQGIGGAGVNVLANICVGDLF, GLYYGVIGGVWAVALSLGPVV, WCFYINLPLCAVVFVIIILLL, IAAIDWVGAALSIGSTLMILL, SATVICLVVFGFIGWILCFSW, LLPVSIFKQIPTLAVLAACFI, AVLGATPILSGVYLLPTAVSI, LTPIYIGFVLQTLGYGLFIDL, IIVFQIIGGLGVGFNFQAPMV, TSAYNFMRNVSGAISVVIGQTVF, and SMWIMYTAFSAAALVVCPFLG.

Belongs to the major facilitator superfamily. TCR/Tet family.

The protein localises to the membrane. MFS-type transporter; part of the gene cluster that mediates the biosynthesis of pyrrolopyrazines, secondary metabolites showing insecticidal activity. Probably involved in the secretion of peramine and other pyrrolopyrazines. This chain is MFS-type transporter ppz2, found in Metarhizium majus (strain ARSEF 297).